A 251-amino-acid chain; its full sequence is Ribosome maturation factor RimP (251 aa).

Residues 176–251 are disordered; it reads SLRRGSAPPQ…ARLKNRDTLH (76 aa). Residues 186 to 196 are compositionally biased toward acidic residues; that stretch reads DGEEGDEEEGA. Over residues 216 to 226 the composition is skewed to basic and acidic residues; it reads PKLDKKSDKPV.

This sequence belongs to the RimP family.

It is found in the cytoplasm. In terms of biological role, required for maturation of 30S ribosomal subunits. This is Ribosome maturation factor RimP from Methylorubrum extorquens (strain PA1) (Methylobacterium extorquens).